We begin with the raw amino-acid sequence, 218 residues long: Ras-related protein RABA5e (218 aa).

Residue 19 to 26 participates in GTP binding; it reads GDSAVGKS. An Effector region motif is present at residues 41 to 49; sequence SKATIGVEF. GTP contacts are provided by residues 67 to 71, 125 to 128, and 155 to 156; these read DTAGQ, NKCD, and SA. 2 S-geranylgeranyl cysteine lipidation sites follow: C214 and C215. C215 is modified (cysteine methyl ester). A propeptide spans 216–218 (removed in mature form); sequence SST.

It belongs to the small GTPase superfamily. Rab family.

It localises to the cell membrane. Intracellular vesicle trafficking and protein transport. In Arabidopsis thaliana (Mouse-ear cress), this protein is Ras-related protein RABA5e (RABA5E).